The sequence spans 72 residues: Translation initiation factor IF-1 (72 aa).

An S1-like domain is found at 1-72; that stretch reads MAKEDVIEMQ…SKGRIVFRAR (72 aa).

Belongs to the IF-1 family. In terms of assembly, component of the 30S ribosomal translation pre-initiation complex which assembles on the 30S ribosome in the order IF-2 and IF-3, IF-1 and N-formylmethionyl-tRNA(fMet); mRNA recruitment can occur at any time during PIC assembly.

The protein localises to the cytoplasm. Its function is as follows. One of the essential components for the initiation of protein synthesis. Stabilizes the binding of IF-2 and IF-3 on the 30S subunit to which N-formylmethionyl-tRNA(fMet) subsequently binds. Helps modulate mRNA selection, yielding the 30S pre-initiation complex (PIC). Upon addition of the 50S ribosomal subunit IF-1, IF-2 and IF-3 are released leaving the mature 70S translation initiation complex. This chain is Translation initiation factor IF-1, found in Vibrio cholerae serotype O1 (strain ATCC 39541 / Classical Ogawa 395 / O395).